The following is a 182-amino-acid chain: Large ribosomal subunit protein bL25 (182 aa).

It belongs to the bacterial ribosomal protein bL25 family. CTC subfamily. As to quaternary structure, part of the 50S ribosomal subunit; part of the 5S rRNA/L5/L18/L25 subcomplex. Contacts the 5S rRNA. Binds to the 5S rRNA independently of L5 and L18.

This is one of the proteins that binds to the 5S RNA in the ribosome where it forms part of the central protuberance. This chain is Large ribosomal subunit protein bL25, found in Borrelia duttonii (strain Ly).